A 267-amino-acid chain; its full sequence is Diphthine--ammonia ligase (267 aa).

Position 97 is a phosphotyrosine (Tyr-97).

Belongs to the Diphthine--ammonia ligase family.

It carries out the reaction diphthine-[translation elongation factor 2] + NH4(+) + ATP = diphthamide-[translation elongation factor 2] + AMP + diphosphate + H(+). It functions in the pathway protein modification; peptidyl-diphthamide biosynthesis. Its function is as follows. Amidase that may catalyze the last step of diphthamide biosynthesis using ammonium and ATP. Diphthamide biosynthesis consists in the conversion of an L-histidine residue in the translation elongation factor (EEF2) to diphthamide. The chain is Diphthine--ammonia ligase from Homo sapiens (Human).